Here is a 476-residue protein sequence, read N- to C-terminus: Glutamyl-tRNA(Gln) amidotransferase subunit A (476 aa).

Residues Lys70 and Ser145 each act as charge relay system in the active site. Ser169 serves as the catalytic Acyl-ester intermediate.

Belongs to the amidase family. GatA subfamily. Heterotrimer of A, B and C subunits.

The enzyme catalyses L-glutamyl-tRNA(Gln) + L-glutamine + ATP + H2O = L-glutaminyl-tRNA(Gln) + L-glutamate + ADP + phosphate + H(+). In terms of biological role, allows the formation of correctly charged Gln-tRNA(Gln) through the transamidation of misacylated Glu-tRNA(Gln) in organisms which lack glutaminyl-tRNA synthetase. The reaction takes place in the presence of glutamine and ATP through an activated gamma-phospho-Glu-tRNA(Gln). In Methanosarcina acetivorans (strain ATCC 35395 / DSM 2834 / JCM 12185 / C2A), this protein is Glutamyl-tRNA(Gln) amidotransferase subunit A.